The sequence spans 213 residues: NADH-quinone oxidoreductase subunit C (213 aa).

The protein belongs to the complex I 30 kDa subunit family. NDH-1 is composed of 15 different subunits. Subunits NuoB, C, D, E, F, and G constitute the peripheral sector of the complex.

The protein localises to the cell membrane. It catalyses the reaction a quinone + NADH + 5 H(+)(in) = a quinol + NAD(+) + 4 H(+)(out). Its function is as follows. NDH-1 shuttles electrons from NADH, via FMN and iron-sulfur (Fe-S) centers, to quinones in the respiratory chain. The immediate electron acceptor for the enzyme in this species is believed to be a menaquinone. Couples the redox reaction to proton translocation (for every two electrons transferred, four hydrogen ions are translocated across the cytoplasmic membrane), and thus conserves the redox energy in a proton gradient. This is NADH-quinone oxidoreductase subunit C from Deinococcus geothermalis (strain DSM 11300 / CIP 105573 / AG-3a).